The following is a 122-amino-acid chain: Large ribosomal subunit protein uL14 (122 aa).

It belongs to the universal ribosomal protein uL14 family. In terms of assembly, part of the 50S ribosomal subunit. Forms a cluster with proteins L3 and L19. In the 70S ribosome, L14 and L19 interact and together make contacts with the 16S rRNA in bridges B5 and B8.

Functionally, binds to 23S rRNA. Forms part of two intersubunit bridges in the 70S ribosome. In Bartonella bacilliformis (strain ATCC 35685 / KC583 / Herrer 020/F12,63), this protein is Large ribosomal subunit protein uL14.